Consider the following 371-residue polypeptide: Alanine dehydrogenase (371 aa).

2 residues coordinate substrate: R15 and K74. H95 acts as the Proton donor/acceptor in catalysis. NAD(+) contacts are provided by residues S133, 177-178, D197, S219, 238-239, 266-269, and 298-301; these read QA, VL, IAID, and VANM. The active-site Proton donor/acceptor is D269.

The protein belongs to the AlaDH/PNT family. As to quaternary structure, homohexamer. Trimer of dimer.

It catalyses the reaction L-alanine + NAD(+) + H2O = pyruvate + NH4(+) + NADH + H(+). The protein operates within amino-acid degradation; L-alanine degradation via dehydrogenase pathway; NH(3) and pyruvate from L-alanine: step 1/1. Functionally, catalyzes the reversible reductive amination of pyruvate to L-alanine. May play a role in cell wall synthesis as L-alanine is an important constituent of the peptidoglycan layer. This is Alanine dehydrogenase (ald) from Staphylococcus epidermidis (strain ATCC 35984 / DSM 28319 / BCRC 17069 / CCUG 31568 / BM 3577 / RP62A).